Here is a 453-residue protein sequence, read N- to C-terminus: Serine--tRNA ligase (453 aa).

Position 249-251 (249-251) interacts with L-serine; the sequence is TSE. Residues 280-282 and Val296 each bind ATP; that span reads RKE. L-serine is bound at residue Glu303. Position 367 to 370 (367 to 370) interacts with ATP; that stretch reads EMVS. Thr404 provides a ligand contact to L-serine.

It belongs to the class-II aminoacyl-tRNA synthetase family. Type-1 seryl-tRNA synthetase subfamily. In terms of assembly, homodimer. The tRNA molecule binds across the dimer.

The protein localises to the cytoplasm. The catalysed reaction is tRNA(Ser) + L-serine + ATP = L-seryl-tRNA(Ser) + AMP + diphosphate + H(+). The enzyme catalyses tRNA(Sec) + L-serine + ATP = L-seryl-tRNA(Sec) + AMP + diphosphate + H(+). It functions in the pathway aminoacyl-tRNA biosynthesis; selenocysteinyl-tRNA(Sec) biosynthesis; L-seryl-tRNA(Sec) from L-serine and tRNA(Sec): step 1/1. Functionally, catalyzes the attachment of serine to tRNA(Ser). Is also able to aminoacylate tRNA(Sec) with serine, to form the misacylated tRNA L-seryl-tRNA(Sec), which will be further converted into selenocysteinyl-tRNA(Sec). This Archaeoglobus fulgidus (strain ATCC 49558 / DSM 4304 / JCM 9628 / NBRC 100126 / VC-16) protein is Serine--tRNA ligase.